Consider the following 38-residue polypeptide: Photosystem II reaction center protein L (38 aa).

A helical membrane pass occupies residues 17 to 37 (SLYWGLLLIFVLAILFSSYIF).

Belongs to the PsbL family. PSII is composed of 1 copy each of membrane proteins PsbA, PsbB, PsbC, PsbD, PsbE, PsbF, PsbH, PsbI, PsbJ, PsbK, PsbL, PsbM, PsbT, PsbX, PsbY, PsbZ, Psb30/Ycf12, at least 3 peripheral proteins of the oxygen-evolving complex and a large number of cofactors. It forms dimeric complexes.

The protein localises to the plastid. Its subcellular location is the chloroplast thylakoid membrane. Its function is as follows. One of the components of the core complex of photosystem II (PSII). PSII is a light-driven water:plastoquinone oxidoreductase that uses light energy to abstract electrons from H(2)O, generating O(2) and a proton gradient subsequently used for ATP formation. It consists of a core antenna complex that captures photons, and an electron transfer chain that converts photonic excitation into a charge separation. This subunit is found at the monomer-monomer interface and is required for correct PSII assembly and/or dimerization. The chain is Photosystem II reaction center protein L from Mesostigma viride (Green alga).